A 555-amino-acid polypeptide reads, in one-letter code: Glucose-6-phosphate isomerase (555 aa).

Residues 169 to 170 (GS), 219 to 224 (SKTFTT), Q364, E368, H399, and K521 contribute to the D-glucose 6-phosphate site. E368 (proton donor) is an active-site residue. Active-site residues include H399 and K521.

Belongs to the GPI family. In terms of assembly, homodimer.

The protein localises to the cytoplasm. Its subcellular location is the cytosol. It catalyses the reaction alpha-D-glucose 6-phosphate = beta-D-fructose 6-phosphate. Its pathway is carbohydrate degradation; glycolysis; D-glyceraldehyde 3-phosphate and glycerone phosphate from D-glucose: step 2/4. Functionally, in the cytoplasm, catalyzes the conversion of glucose-6-phosphate to fructose-6-phosphate, the second step in glycolysis, and the reverse reaction during gluconeogenesis. The chain is Glucose-6-phosphate isomerase (PGI1) from Eremothecium gossypii (strain ATCC 10895 / CBS 109.51 / FGSC 9923 / NRRL Y-1056) (Yeast).